A 643-amino-acid polypeptide reads, in one-letter code: Thread biopolymer filament subunit alpha (643 aa).

Residues 1–13 are compositionally biased toward polar residues; the sequence is MSISQTVSKSYTK. The interval 1 to 34 is disordered; that stretch reads MSISQTVSKSYTKSVSRGGQGVSYSQSSSHKVGG. Residues 1 to 191 are head; the sequence is MSISQTVSKS…PDTVQHTRIR (191 aa). Residues 14 to 31 show a composition bias toward low complexity; that stretch reads SVSRGGQGVSYSQSSSHK. The 319-residue stretch at 192–510 folds into the IF rod domain; the sequence is EKQDLQTLNT…KLLDSEETRI (319 aa). The segment at 193–227 is coil 1A; the sequence is KQDLQTLNTKFANLVDQVRTLEQHNAILKAQISMI. A linker 1 region spans residues 228-240; that stretch reads TSPSDTPEGPVNT. The segment at 241-341 is coil 1B; the sequence is AVVASTVTAT…YNARVREVQA (101 aa). Positions 342–362 are linker 12; sequence AVTGGPTAAYSIRVDNTHQAI. Residues 363-381 are coil 2A; sequence DLTTSLQEMKTHYEVLATK. Residues 382–389 form a linker 2 region; the sequence is SREEAFTQ. The segment at 390 to 510 is coil 2B; that stretch reads VQPRIQEMAV…KLLDSEETRI (121 aa). Residues 511-643 are tail; that stretch reads SHGGGITITT…SSARSSSRIY (133 aa). Residues 622–643 are disordered; sequence SRAGYSASRKSYSSARSSSRIY.

The protein belongs to the intermediate filament family. In terms of assembly, coiled-coil heterodimer of an alpha and a gamma subunit. Assemble into 10 nm filaments. Forms a massive, conical, intermediate filament biopolymer of approximately 60 cm.

It is found in the secreted. The protein resides in the extracellular space. In terms of biological role, released extracellularly into seawater and provides physical and biological defense against invasive organism by modulation of the viscoelastic properties of mucus. The protein is Thread biopolymer filament subunit alpha of Eptatretus stoutii (Pacific hagfish).